The sequence spans 86 residues: Protein Tat (86 aa).

Residues methionine 1–alanine 21 form a disordered region. The segment at methionine 1–arginine 24 is interaction with human CREBBP. The interval methionine 1–glycine 48 is transactivation. Residues cysteine 22, cysteine 25, and cysteine 27 each contribute to the Zn(2+) site. The cysteine-rich stretch occupies residues cysteine 22–cysteine 37. Lysine 28 carries the N6-acetyllysine; by host PCAF modification. Zn(2+)-binding residues include cysteine 30, histidine 33, cysteine 34, and cysteine 37. Residues phenylalanine 38 to glycine 48 form a core region. Residues tyrosine 47–glutamate 86 are disordered. The span at glycine 48–proline 58 shows a compositional bias: basic residues. The short motif at arginine 49–arginine 57 is the Nuclear localization signal, RNA-binding (TAR), and protein transduction element. Positions arginine 49–glutamate 86 are interaction with the host capping enzyme RNGTT. Residues lysine 50 and lysine 51 each carry the N6-acetyllysine; by host EP300 and GCN5L2 modification. Residues arginine 52 and arginine 53 each carry the asymmetric dimethylarginine; by host PRMT6 modification. Positions glutamine 60–glycine 79 are enriched in polar residues. Residue lysine 71 forms a Glycyl lysine isopeptide (Lys-Gly) (interchain with G-Cter in ubiquitin) linkage.

Belongs to the lentiviruses Tat family. In terms of assembly, interacts with host CCNT1. Associates with the P-TEFb complex composed at least of Tat, P-TEFb (CDK9 and CCNT1), TAR RNA, RNA Pol II. Recruits the HATs CREBBP, TAF1/TFIID, EP300, PCAF and GCN5L2. Interacts with host KAT5/Tip60; this interaction targets the latter to degradation. Interacts with the host deacetylase SIRT1. Interacts with host capping enzyme RNGTT; this interaction stimulates RNGTT. Binds to host KDR, and to the host integrins ITGAV/ITGB3 and ITGA5/ITGB1. Interacts with host KPNB1/importin beta-1 without previous binding to KPNA1/importin alpha-1. Interacts with EIF2AK2. Interacts with host nucleosome assembly protein NAP1L1; this interaction may be required for the transport of Tat within the nucleus, since the two proteins interact at the nuclear rim. Interacts with host C1QBP/SF2P32; this interaction involves lysine-acetylated Tat. Interacts with the host chemokine receptors CCR2, CCR3 and CXCR4. Interacts with host DPP4/CD26; this interaction may trigger an anti-proliferative effect. Interacts with host LDLR. Interacts with the host extracellular matrix metalloproteinase MMP1. Interacts with host PRMT6; this interaction mediates Tat's methylation. Interacts with, and is ubiquitinated by MDM2/Hdm2. Interacts with host PSMC3 and HTATIP2. Interacts with STAB1; this interaction may overcome SATB1-mediated repression of IL2 and IL2RA (interleukin) in T cells by binding to the same domain than HDAC1. Interacts (when acetylated) with human CDK13, thereby increasing HIV-1 mRNA splicing and promoting the production of the doubly spliced HIV-1 protein Nef. Interacts with host TBP; this interaction modulates the activity of transcriptional pre-initiation complex. Interacts with host RELA. Interacts with host PLSCR1; this interaction negatively regulates Tat transactivation activity by altering its subcellular distribution. In terms of processing, asymmetrical arginine methylation by host PRMT6 seems to diminish the transactivation capacity of Tat and affects the interaction with host CCNT1. Acetylation by EP300, CREBBP, GCN5L2/GCN5 and PCAF regulates the transactivation activity of Tat. EP300-mediated acetylation of Lys-50 promotes dissociation of Tat from the TAR RNA through the competitive binding to PCAF's bromodomain. In addition, the non-acetylated Tat's N-terminus can also interact with PCAF. PCAF-mediated acetylation of Lys-28 enhances Tat's binding to CCNT1. Lys-50 is deacetylated by SIRT1. Post-translationally, polyubiquitination by host MDM2 does not target Tat to degradation, but activates its transactivation function and fosters interaction with CCNT1 and TAR RNA. In terms of processing, phosphorylated by EIF2AK2 on serine and threonine residues adjacent to the basic region important for TAR RNA binding and function. Phosphorylation of Tat by EIF2AK2 is dependent on the prior activation of EIF2AK2 by dsRNA.

It localises to the host nucleus. The protein localises to the host nucleolus. Its subcellular location is the host cytoplasm. It is found in the secreted. In terms of biological role, transcriptional activator that increases RNA Pol II processivity, thereby increasing the level of full-length viral transcripts. Recognizes a hairpin structure at the 5'-LTR of the nascent viral mRNAs referred to as the transactivation responsive RNA element (TAR) and recruits the cyclin T1-CDK9 complex (P-TEFb complex) that will in turn hyperphosphorylate the RNA polymerase II to allow efficient elongation. The CDK9 component of P-TEFb and other Tat-activated kinases hyperphosphorylate the C-terminus of RNA Pol II that becomes stabilized and much more processive. Other factors such as HTATSF1/Tat-SF1, SUPT5H/SPT5, and HTATIP2 are also important for Tat's function. Besides its effect on RNA Pol II processivity, Tat induces chromatin remodeling of proviral genes by recruiting the histone acetyltransferases (HATs) CREBBP, EP300 and PCAF to the chromatin. This also contributes to the increase in proviral transcription rate, especially when the provirus integrates in transcriptionally silent region of the host genome. To ensure maximal activation of the LTR, Tat mediates nuclear translocation of NF-kappa-B by interacting with host RELA. Through its interaction with host TBP, Tat may also modulate transcription initiation. Tat can reactivate a latently infected cell by penetrating in it and transactivating its LTR promoter. In the cytoplasm, Tat is thought to act as a translational activator of HIV-1 mRNAs. Extracellular circulating Tat can be endocytosed by surrounding uninfected cells via the binding to several surface receptors such as CD26, CXCR4, heparan sulfate proteoglycans (HSPG) or LDLR. Neurons are rarely infected, but they internalize Tat via their LDLR. Through its interaction with nuclear HATs, Tat is potentially able to control the acetylation-dependent cellular gene expression. Modulates the expression of many cellular genes involved in cell survival, proliferation or in coding for cytokines or cytokine receptors. Tat plays a role in T-cell and neurons apoptosis. Tat induced neurotoxicity and apoptosis probably contribute to neuroAIDS. Circulating Tat also acts as a chemokine-like and/or growth factor-like molecule that binds to specific receptors on the surface of the cells, affecting many cellular pathways. In the vascular system, Tat binds to ITGAV/ITGB3 and ITGA5/ITGB1 integrins dimers at the surface of endothelial cells and competes with bFGF for heparin-binding sites, leading to an excess of soluble bFGF. This Homo sapiens (Human) protein is Protein Tat.